The primary structure comprises 572 residues: Probable lysosomal cobalamin transporter (572 aa).

9 helical membrane passes run 8-28 (VIWF…SVFI), 40-60 (FVTF…MLLP), 95-115 (IIYY…IPFA), 145-165 (TLTF…APMM), 188-208 (AFTF…AFYT), 314-334 (GGFC…MTVV), 374-394 (IIFA…VVAV), 421-441 (AVLT…LVPG), and 499-519 (VALN…LFLA). The interval 522–544 (GRRRGRGRESVSKHQKKRQSYMR) is disordered.

This sequence belongs to the LIMR family. LMBRD1 subfamily.

The protein localises to the lysosome membrane. Its function is as follows. Probable lysosomal cobalamin transporter. Required to export cobalamin from lysosomes allowing its conversion to cofactors. The polypeptide is Probable lysosomal cobalamin transporter (Aspergillus fumigatus (strain ATCC MYA-4609 / CBS 101355 / FGSC A1100 / Af293) (Neosartorya fumigata)).